The following is a 139-amino-acid chain: ATP synthase epsilon chain (139 aa).

Belongs to the ATPase epsilon chain family. F-type ATPases have 2 components, CF(1) - the catalytic core - and CF(0) - the membrane proton channel. CF(1) has five subunits: alpha(3), beta(3), gamma(1), delta(1), epsilon(1). CF(0) has three main subunits: a, b and c.

It is found in the cell inner membrane. Its function is as follows. Produces ATP from ADP in the presence of a proton gradient across the membrane. In Actinobacillus pleuropneumoniae serotype 7 (strain AP76), this protein is ATP synthase epsilon chain.